Here is a 450-residue protein sequence, read N- to C-terminus: uncharacterized protein (450 aa).

Residues 141 to 151 (WLDKTDGEKNS) show a composition bias toward basic and acidic residues. Disordered stretches follow at residues 141–171 (WLDK…DSAG), 276–298 (LQDS…AVSQ), and 395–416 (DDED…LSRN). The segment covering 152-171 (EASSTDNSLENSTKGADSAG) has biased composition (polar residues). Positions 283 to 298 (QGDKGEKESKDDAVSQ) are enriched in basic and acidic residues. The span at 395–411 (DDEDEDNVDNSEGDEES) shows a compositional bias: acidic residues.

This is an uncharacterized protein from Saccharomyces cerevisiae (strain ATCC 204508 / S288c) (Baker's yeast).